Consider the following 331-residue polypeptide: Doxorubicin resistance ATP-binding protein DrrA (331 aa).

The ABC transporter domain occupies 8–240; the sequence is VVVNGVRKTY…AGDTFCEIVP (233 aa). ATP is bound at residue 42-49; it reads GPNGAGKT.

It belongs to the ABC transporter superfamily. Drug exporter-1 (DrugE1) (TC 3.A.1.105) family. As to quaternary structure, the complex is composed of two ATP-binding proteins (DrrA) and two transmembrane proteins (DrrB and DrrC).

The protein localises to the cell membrane. Its function is as follows. Part of the ABC transporter complex DrrABC involved in doxorubicin resistance. Responsible for energy coupling to the transport system. Binds ATP. In Mycobacterium tuberculosis (strain CDC 1551 / Oshkosh), this protein is Doxorubicin resistance ATP-binding protein DrrA (drrA).